A 443-amino-acid chain; its full sequence is Threonine/serine transporter TdcC (443 aa).

The next 11 membrane-spanning stretches (helical) occupy residues 22 to 42, 44 to 64, 97 to 117, 140 to 160, 163 to 183, 207 to 227, 261 to 281, 311 to 331, 366 to 386, 389 to 409, and 423 to 443; these read TTWT…FFPI, AGFG…PIAF, GVVI…IYGV, FVAL…KDLM, VMSY…LSLI, ILIT…FSPI, MLMV…LSPA, FAIT…FKSF, ISMI…PNIL, IEAM…MYAI, and DNVF…YKLF.

This sequence belongs to the amino acid/polyamine transporter 2 family. SdaC/TdcC subfamily.

It is found in the cell inner membrane. It catalyses the reaction L-threonine(in) + H(+)(in) = L-threonine(out) + H(+)(out). It carries out the reaction L-serine(in) + H(+)(in) = L-serine(out) + H(+)(out). Functionally, involved in the import of threonine and serine into the cell, with the concomitant import of a proton (symport system). In Shigella sonnei (strain Ss046), this protein is Threonine/serine transporter TdcC.